A 364-amino-acid chain; its full sequence is Very-long-chain (3R)-3-hydroxyacyl-CoA dehydratase 3 (364 aa).

The Cytoplasmic portion of the chain corresponds to Met-1 to Tyr-151. Residues Val-7 to Thr-96 enclose the CS domain. Thr-9 is subject to Phosphothreonine. Residues Leu-113–Glu-138 adopt a coiled-coil conformation. Ser-116 and Ser-137 each carry phosphoserine. A helical transmembrane segment spans residues Leu-152–Val-172. The Lumenal portion of the chain corresponds to Arg-173–Asp-191. The chain crosses the membrane as a helical span at residues Met-192–Thr-212. Over Thr-213 to Ser-214 the chain is Cytoplasmic. A helical transmembrane segment spans residues Pro-215 to Gly-235. Residues Thr-236–Ala-244 are Lumenal-facing. Residues Val-245–Met-265 traverse the membrane as a helical segment. The Cytoplasmic portion of the chain corresponds to Leu-266–Thr-282. The chain crosses the membrane as a helical span at residues Leu-283–Ile-303. Residues Tyr-288 and Glu-295 contribute to the active site. The Lumenal segment spans residues Pro-304–Val-324. Residues Arg-325–Phe-345 form a helical membrane-spanning segment. Over Arg-346 to His-364 the chain is Cytoplasmic.

The protein belongs to the very long-chain fatty acids dehydratase HACD family. As to quaternary structure, may interact with enzymes of the ELO family (including ELOVL1); with those enzymes that mediate condensation, the first of the four steps of the reaction cycle responsible for fatty acids elongation, may be part of a larger fatty acids elongase complex. Interacts with RAC1.

It localises to the endoplasmic reticulum membrane. It carries out the reaction a very-long-chain (3R)-3-hydroxyacyl-CoA = a very-long-chain (2E)-enoyl-CoA + H2O. The enzyme catalyses (3R)-hydroxyhexadecanoyl-CoA = (2E)-hexadecenoyl-CoA + H2O. It functions in the pathway lipid metabolism; fatty acid biosynthesis. In terms of biological role, catalyzes the third of the four reactions of the long-chain fatty acids elongation cycle. This endoplasmic reticulum-bound enzymatic process, allows the addition of two carbons to the chain of long- and very long-chain fatty acids/VLCFAs per cycle. This enzyme catalyzes the dehydration of the 3-hydroxyacyl-CoA intermediate into trans-2,3-enoyl-CoA, within each cycle of fatty acid elongation. Thereby, it participates in the production of VLCFAs of different chain lengths that are involved in multiple biological processes as precursors of membrane lipids and lipid mediators. Involved in Rac1-signaling pathways leading to the modulation of gene expression. The polypeptide is Very-long-chain (3R)-3-hydroxyacyl-CoA dehydratase 3 (Pongo abelii (Sumatran orangutan)).